Here is a 227-residue protein sequence, read N- to C-terminus: MFGQGRLGQAMALLLFLGMTAALARGCLQCDPNFAEKFSFYRHHVNLKSWWVGDIPVSGMLLSDWIQNTMKELHLAIPAEITRKKLYQVAEAVYQRMDQLYQGKMYFPGYFPNELRAIFREQVRLIQNAIIESRIDCQRHCGIYQYETISCSNCTDSHVICFGYYCKSSAQWESAVQGLLKYINTWHKQDEKMRTTPAFLSQNIKCLEPQHLVNLTLEKVSECLTQH.

Residues 1 to 24 form the signal peptide; sequence MFGQGRLGQAMALLLFLGMTAALA. N-linked (GlcNAc...) asparagine glycans are attached at residues Asn153 and Asn214.

The protein belongs to the Izumo family.

It localises to the secreted. The polypeptide is Izumo sperm-egg fusion protein 4 (Izumo4) (Mus musculus (Mouse)).